A 476-amino-acid chain; its full sequence is Adenylyl cyclase-associated protein 2 (476 aa).

Positions 223–322 (SILSSGPGLP…KSNSPQKHTP (100 aa)) are disordered. The segment covering 230–247 (GLPPPPPPPPPPGPPPPF) has biased composition (pro residues). Polar residues predominate over residues 288–299 (KNPSLRAQGQIR). Phosphoserine is present on residues Ser300 and Ser308. Residues 300–317 (SPTKTHTPSPTSPKSNSP) show a composition bias toward low complexity. Residues 317–454 (PQKHTPVLEL…QDDDYREFPI (138 aa)) form the C-CAP/cofactor C-like domain.

This sequence belongs to the CAP family. As to expression, expressed in the heart, skeletal muscle, and brain.

The protein localises to the cell membrane. Involved in the regulation of actin polymerization. The sequence is that of Adenylyl cyclase-associated protein 2 (Cap2) from Mus musculus (Mouse).